A 274-amino-acid polypeptide reads, in one-letter code: MQPLHGNCLIAYARHKYILTMVNGEYRYFNGGDLVFADASQIQVDKCVENFVLVSRDTLSLFLPMLKEEALKLHVHKKVPSLLVHHCTRDIPVFQEVAQLSQNKNLRYAEMLRKRALIFALLSVFLEDTQFIPLLLNVLQPNMRTRVCTVINNNIAHEWTLARIASELLMSPSLLKKKLREEGTSYSQLLTECRMQRALQLIVIYGVSIKRVAVSCGYHSVSYFIYVFRNYYGMTPTEYQERSAQELPNCGSAASMAAQGIFYGTDRSAEGIRL.

Positions 145–242 constitute an HTH araC/xylS-type domain; sequence TRVCTVINNN…GMTPTEYQER (98 aa). 2 DNA-binding regions (H-T-H motif) span residues 162-183 and 209-232; these read ARIA…REEG and IKRV…RNYY.

Homodimer.

In terms of biological role, positively regulates the expression of about fifteen genes involved in acid resistance such as gadA, gadB and gadC. Depending on the conditions (growth phase and medium), can repress gadW. This chain is HTH-type transcriptional regulator GadX (gadX), found in Escherichia coli O6:H1 (strain CFT073 / ATCC 700928 / UPEC).